The sequence spans 379 residues: MNTPRIIVAMSGGVDSSVAAWRLNSQREAIAGLFMRNWTDDGNGQCHAEEDRRDAVAVCGILGIAFHFRDFSHEYWQEVFTHFLAEYANGRTPNPDVLCNREIKFKHFLETARELGADRIATGHYARIEHYRQRWHLLRGADRSKDQSYFLHQLGQEQLAATLFPIGDLEKQQLRQLAHQTGLPTHAKKDSTGICFIGERNFREFLKQYLPAQPGEIRDPQEQRIAEHPGVFYFTLGQRQGLNIGGVRNRPPSPWYVIGKDLATNVLYVDQHRDSPFLQSRWLRSEPAHWVSGSPPAHTFTCTAQTRYRQADEPCKVTVRNDGSLDVDFTRTQWAVTPGQSLVLYDGNECLGGAVIATTDAPLERKRARNLSKTENVLQ.

ATP is bound by residues 9–16 (AMSGGVDS) and M35. The interval 94–96 (NPD) is interaction with target base in tRNA. C99 serves as the catalytic Nucleophile. An intrachain disulfide couples C99 to C195. Residue G123 coordinates ATP. The tract at residues 145-147 (KDQ) is interaction with tRNA. The Cysteine persulfide intermediate role is filled by C195. Residues 307–308 (RY) are interaction with tRNA.

This sequence belongs to the MnmA/TRMU family.

The protein localises to the cytoplasm. It carries out the reaction S-sulfanyl-L-cysteinyl-[protein] + uridine(34) in tRNA + AH2 + ATP = 2-thiouridine(34) in tRNA + L-cysteinyl-[protein] + A + AMP + diphosphate + H(+). Catalyzes the 2-thiolation of uridine at the wobble position (U34) of tRNA, leading to the formation of s(2)U34. The sequence is that of tRNA-specific 2-thiouridylase MnmA from Xylella fastidiosa (strain M12).